Reading from the N-terminus, the 214-residue chain is tRNA (guanine-N(7)-)-methyltransferase (214 aa).

Residues Glu-45, Asp-70, Asn-97, and Asn-119 each coordinate S-adenosyl-L-methionine. Lys-123 is a substrate binding site. Residues 125–130 are interaction with RNA; the sequence is RHNKRR. Residues Asp-155 and 193–196 contribute to the substrate site; that span reads TEYE.

Belongs to the class I-like SAM-binding methyltransferase superfamily. TrmB family.

The enzyme catalyses guanosine(46) in tRNA + S-adenosyl-L-methionine = N(7)-methylguanosine(46) in tRNA + S-adenosyl-L-homocysteine. Its pathway is tRNA modification; N(7)-methylguanine-tRNA biosynthesis. Its function is as follows. Catalyzes the formation of N(7)-methylguanine at position 46 (m7G46) in tRNA. This is tRNA (guanine-N(7)-)-methyltransferase from Clostridium novyi (strain NT).